A 262-amino-acid chain; its full sequence is Troponin T, slow skeletal muscle (262 aa).

Acidic residues predominate over residues 1–31 (MSDAEEQEYEEEQPEEEEAAEEEEAPEEPEP). Disordered stretches follow at residues 1-59 (MSDA…PEGE), 107-153 (RAER…KKKV), and 165-197 (LVKA…NIDH). Serine 2 carries the phosphoserine; by CK2 modification. The segment covering 32-41 (VAEREEERPK) has biased composition (basic and acidic residues). Residues 43–55 (SRPVVPPLIPPKI) show a composition bias toward pro residues. Composition is skewed to basic and acidic residues over residues 107 to 149 (RAER…DDAK) and 177 to 197 (TGRE…NIDH).

It belongs to the troponin T family. Interacts with TPM3.

In terms of biological role, troponin T is the tropomyosin-binding subunit of troponin, the thin filament regulatory complex which confers calcium-sensitivity to striated muscle actomyosin ATPase activity. The chain is Troponin T, slow skeletal muscle (TNNT1) from Sus scrofa (Pig).